The sequence spans 294 residues: Acetyl-coenzyme A carboxylase carboxyl transferase subunit beta (294 aa).

A CoA carboxyltransferase N-terminal domain is found at 29–294; it reads LWEKCPECGQ…TQEVKLQTNA (266 aa). Zn(2+) contacts are provided by Cys33, Cys36, Cys52, and Cys55. The C4-type zinc finger occupies 33-55; that stretch reads CPECGQVVYRKDLIDNCSVCSNC.

The protein belongs to the AccD/PCCB family. As to quaternary structure, acetyl-CoA carboxylase is a heterohexamer composed of biotin carboxyl carrier protein (AccB), biotin carboxylase (AccC) and two subunits each of ACCase subunit alpha (AccA) and ACCase subunit beta (AccD). It depends on Zn(2+) as a cofactor.

The protein resides in the cytoplasm. The enzyme catalyses N(6)-carboxybiotinyl-L-lysyl-[protein] + acetyl-CoA = N(6)-biotinyl-L-lysyl-[protein] + malonyl-CoA. The protein operates within lipid metabolism; malonyl-CoA biosynthesis; malonyl-CoA from acetyl-CoA: step 1/1. Functionally, component of the acetyl coenzyme A carboxylase (ACC) complex. Biotin carboxylase (BC) catalyzes the carboxylation of biotin on its carrier protein (BCCP) and then the CO(2) group is transferred by the transcarboxylase to acetyl-CoA to form malonyl-CoA. In Prochlorococcus marinus (strain NATL1A), this protein is Acetyl-coenzyme A carboxylase carboxyl transferase subunit beta.